A 113-amino-acid chain; its full sequence is Iron-sulfur cluster insertion protein ErpA (113 aa).

Cysteine 41, cysteine 105, and cysteine 107 together coordinate iron-sulfur cluster.

Belongs to the HesB/IscA family. As to quaternary structure, homodimer. Iron-sulfur cluster is required as a cofactor.

Required for insertion of 4Fe-4S clusters for at least IspG. The protein is Iron-sulfur cluster insertion protein ErpA of Vibrio parahaemolyticus serotype O3:K6 (strain RIMD 2210633).